The sequence spans 398 residues: Enoyl-[acyl-carrier-protein] reductase [NADH] (398 aa).

NAD(+) is bound by residues 48–53 (GASTGY), 74–75 (FE), 111–112 (DA), and 139–140 (LA). Substrate is bound at residue tyrosine 225. Tyrosine 235 serves as the catalytic Proton donor. Residues lysine 244 and 273–275 (VVT) each bind NAD(+).

Belongs to the TER reductase family. Monomer.

It catalyses the reaction a 2,3-saturated acyl-[ACP] + NAD(+) = a (2E)-enoyl-[ACP] + NADH + H(+). It functions in the pathway lipid metabolism; fatty acid biosynthesis. Its function is as follows. Involved in the final reduction of the elongation cycle of fatty acid synthesis (FAS II). Catalyzes the reduction of a carbon-carbon double bond in an enoyl moiety that is covalently linked to an acyl carrier protein (ACP). This chain is Enoyl-[acyl-carrier-protein] reductase [NADH], found in Paraburkholderia xenovorans (strain LB400).